The primary structure comprises 86 residues: Tryptophan-containing weak neurotoxin (86 aa).

Positions 1 to 21 (MKTLLLTLVVVTIVCLDLGYT) are cleaved as a signal peptide. 5 disulfide bridges follow: cysteine 24–cysteine 45, cysteine 27–cysteine 32, cysteine 38–cysteine 63, cysteine 67–cysteine 78, and cysteine 79–cysteine 84.

This sequence belongs to the three-finger toxin family. Ancestral subfamily. Orphan group II sub-subfamily. Monomer in solution. The disulfide bond Cys-27-Cys-32 is probably not needed for efficient interaction of the toxin with the target receptor (Torpedo muscle or alpha-7/CHRNA7 nAChR). Expressed by the venom gland.

The protein resides in the secreted. In terms of biological role, neurotoxin that irreversibly inhibits nicotinic acetylcholine receptors (nAChR) and allosterically interacts with muscarinic acetylcholine receptors (mAChR). The loop II is involved in the interaction of this toxin with nAChR and mAChR. On nAChR, it acts as a competitive antagonist (muscle-type and alpha-7/CHRNA7) with IC(50) values in the micromolar range. On mAChR, in presence of ACh, it partially inhibits the effect of acetylcholine (ACh) (allosteric antagonist), whereas in the absence of ACh, it activates the receptor (allosteric agonist). It also shows a very weak inhibition of GABA(A) receptor composed of alpha-1-beta-3-gamma-2 (GABRA1 and GABRB3 and GABRG2) subunits (10 uM inhibit 31% current). In vivo, is nonlethal to mice at concentrations up to 20 mg/kg, but exerts a myorelaxant effect, induces a dose-dependent decrease in blood pressure and an increase in heart rate in mice and rats. The protein is Tryptophan-containing weak neurotoxin of Naja kaouthia (Monocled cobra).